We begin with the raw amino-acid sequence, 332 residues long: Anthranilate phosphoribosyltransferase (332 aa).

5-phospho-alpha-D-ribose 1-diphosphate is bound by residues glycine 78, 81 to 82, serine 86, 88 to 91, 106 to 114, and serine 118; these read GD, NIST, and KHGNKSITS. Anthranilate is bound at residue glycine 78. Mg(2+) is bound at residue serine 90. Asparagine 109 serves as a coordination point for anthranilate. Arginine 163 contributes to the anthranilate binding site. Residues aspartate 222 and glutamate 223 each contribute to the Mg(2+) site.

Belongs to the anthranilate phosphoribosyltransferase family. In terms of assembly, homodimer. Mg(2+) is required as a cofactor.

The catalysed reaction is N-(5-phospho-beta-D-ribosyl)anthranilate + diphosphate = 5-phospho-alpha-D-ribose 1-diphosphate + anthranilate. It participates in amino-acid biosynthesis; L-tryptophan biosynthesis; L-tryptophan from chorismate: step 2/5. Catalyzes the transfer of the phosphoribosyl group of 5-phosphorylribose-1-pyrophosphate (PRPP) to anthranilate to yield N-(5'-phosphoribosyl)-anthranilate (PRA). This is Anthranilate phosphoribosyltransferase from Staphylococcus aureus (strain USA300).